Here is a 436-residue protein sequence, read N- to C-terminus: UDP-N-acetylmuramate--L-alanine ligase (436 aa).

108 to 114 (GAHGKTS) serves as a coordination point for ATP.

Belongs to the MurCDEF family.

The protein resides in the cytoplasm. The enzyme catalyses UDP-N-acetyl-alpha-D-muramate + L-alanine + ATP = UDP-N-acetyl-alpha-D-muramoyl-L-alanine + ADP + phosphate + H(+). The protein operates within cell wall biogenesis; peptidoglycan biosynthesis. Cell wall formation. The chain is UDP-N-acetylmuramate--L-alanine ligase from Bacillus cereus (strain B4264).